The primary structure comprises 851 residues: UPF0182 protein CYA_1810 (851 aa).

Transmembrane regions (helical) follow at residues 7–27, 47–67, 76–96, 141–161, 168–188, 220–240, and 259–279; these read GLVL…LASF, VLAR…VVGS, ASTA…AWSL, FNLV…ELGL, LALS…LFLL, LPAT…FWAL, and WASS…FGLL.

It belongs to the UPF0182 family.

The protein localises to the cell membrane. The sequence is that of UPF0182 protein CYA_1810 from Synechococcus sp. (strain JA-3-3Ab) (Cyanobacteria bacterium Yellowstone A-Prime).